Here is a 127-residue protein sequence, read N- to C-terminus: Small ribosomal subunit protein bS6 (127 aa).

A disordered region spans residues 99–127; it reads PLPAPRVVPGSEPAAAPQEQPAANSEAAS. Residues 109–127 show a composition bias toward low complexity; that stretch reads SEPAAAPQEQPAANSEAAS.

It belongs to the bacterial ribosomal protein bS6 family.

Its function is as follows. Binds together with bS18 to 16S ribosomal RNA. The protein is Small ribosomal subunit protein bS6 of Parasynechococcus marenigrum (strain WH8102).